A 340-amino-acid chain; its full sequence is Probable glucan endo-1,3-beta-glucosidase BG1 (340 aa).

A signal peptide spans 1-25; that stretch reads MDLRFLASLTLLLGLFFVNTNPTGG. Glutamate 120 functions as the Proton donor in the catalytic mechanism. Glutamate 262 functions as the Nucleophile in the catalytic mechanism.

The protein belongs to the glycosyl hydrolase 17 family.

Its subcellular location is the secreted. It carries out the reaction Hydrolysis of (1-&gt;3)-beta-D-glucosidic linkages in (1-&gt;3)-beta-D-glucans.. Its function is as follows. May play a role in plant defense against pathogens. The protein is Probable glucan endo-1,3-beta-glucosidase BG1 of Arabidopsis thaliana (Mouse-ear cress).